The chain runs to 289 residues: Acetyl-coenzyme A carboxylase carboxyl transferase subunit beta (289 aa).

Positions 34-289 constitute a CoA carboxyltransferase N-terminal domain; that stretch reads MWVKCNKCGE…KLINMHQNSF (256 aa). Zn(2+) is bound by residues Cys38, Cys41, Cys57, and Cys60. A C4-type zinc finger spans residues 38 to 60; the sequence is CNKCGEILYQNDLEKNYMVCNLC.

Belongs to the AccD/PCCB family. In terms of assembly, acetyl-CoA carboxylase is a heterohexamer composed of biotin carboxyl carrier protein (AccB), biotin carboxylase (AccC) and two subunits each of ACCase subunit alpha (AccA) and ACCase subunit beta (AccD). Zn(2+) is required as a cofactor.

It is found in the cytoplasm. The catalysed reaction is N(6)-carboxybiotinyl-L-lysyl-[protein] + acetyl-CoA = N(6)-biotinyl-L-lysyl-[protein] + malonyl-CoA. It functions in the pathway lipid metabolism; malonyl-CoA biosynthesis; malonyl-CoA from acetyl-CoA: step 1/1. Component of the acetyl coenzyme A carboxylase (ACC) complex. Biotin carboxylase (BC) catalyzes the carboxylation of biotin on its carrier protein (BCCP) and then the CO(2) group is transferred by the transcarboxylase to acetyl-CoA to form malonyl-CoA. This Clostridium botulinum (strain ATCC 19397 / Type A) protein is Acetyl-coenzyme A carboxylase carboxyl transferase subunit beta.